A 190-amino-acid polypeptide reads, in one-letter code: Lysozyme g (190 aa).

The span at 1–10 (MPYGKIEDIK) shows a compositional bias: basic and acidic residues. The tract at residues 1 to 31 (MPYGKIEDIKTSGASDVTAAQDGLKEGGWKS) is disordered. Residues Glu-71 and Asp-84 contribute to the active site.

It belongs to the glycosyl hydrolase 23 family.

It carries out the reaction Hydrolysis of (1-&gt;4)-beta-linkages between N-acetylmuramic acid and N-acetyl-D-glucosamine residues in a peptidoglycan and between N-acetyl-D-glucosamine residues in chitodextrins.. The chain is Lysozyme g from Takifugu rubripes (Japanese pufferfish).